A 387-amino-acid chain; its full sequence is Chlorophyll synthase, chloroplastic (387 aa).

The N-terminal 57 residues, 1–57, are a transit peptide targeting the chloroplast; that stretch reads MTSILNTVSTIHSSRVTSVDRVGVLSLRNSDSVEFTRRRSGFSTLIYESPGRRFVVR. Residues 62–81 are disordered; it reads DTDKVKSQTPDKAPAGGSSI. 7 consecutive transmembrane segments (helical) span residues 182-202, 210-230, 241-261, 266-286, 311-331, 336-356, and 364-384; these read VITQ…ILDV, TVFY…APPL, FALG…LFGT, VVVL…VNDF, WICV…LLAS, YALA…KYFL, and VKYQ…TALA.

This sequence belongs to the UbiA prenyltransferase family. Chlorophyll synthase subfamily. In terms of tissue distribution, low level in flower buds, flowers, stems, leaves, greening cotyledons and immature siliques, but not in mature siliques or seeds.

It is found in the plastid. The protein localises to the chloroplast membrane. The enzyme catalyses phytyl diphosphate + chlorophyllide a + H(+) = chlorophyll a + diphosphate. It functions in the pathway porphyrin-containing compound metabolism; chlorophyll biosynthesis. Its function is as follows. Involved in one of the last steps of the biosynthesis of chlorophyll a. Catalyzes the esterification of chlorophillide a or b with a preference for geranylgeranyldiphosphate (GGPP) rather than for phytyldiphosphate (PhyPP). The protein is Chlorophyll synthase, chloroplastic (CHLG) of Arabidopsis thaliana (Mouse-ear cress).